The following is a 500-amino-acid chain: Galactose/methyl galactoside import ATP-binding protein MglA (500 aa).

ABC transporter domains follow at residues 8-243 (LEME…VGRD) and 257-500 (EMIL…AKYL). 40 to 47 (GENGAGKS) is an ATP binding site.

This sequence belongs to the ABC transporter superfamily. Galactose/methyl galactoside importer (TC 3.A.1.2.3) family. The complex is composed of one ATP-binding protein (MglA), two transmembrane proteins (MglC) and a solute-binding protein (MglB).

Its subcellular location is the cell inner membrane. The enzyme catalyses D-galactose(out) + ATP + H2O = D-galactose(in) + ADP + phosphate + H(+). It carries out the reaction methyl beta-D-galactoside(out) + ATP + H2O = methyl beta-D-galactoside(in) + ADP + phosphate + H(+). Functionally, part of the ABC transporter complex MglABC involved in galactose/methyl galactoside import. Responsible for energy coupling to the transport system. The chain is Galactose/methyl galactoside import ATP-binding protein MglA from Fusobacterium nucleatum subsp. nucleatum (strain ATCC 25586 / DSM 15643 / BCRC 10681 / CIP 101130 / JCM 8532 / KCTC 2640 / LMG 13131 / VPI 4355).